The primary structure comprises 427 residues: Serine--tRNA ligase (427 aa).

229 to 231 (TAE) lines the L-serine pocket. 260–262 (RSE) is an ATP binding site. E283 provides a ligand contact to L-serine. Residue 347–350 (EISS) coordinates ATP. An L-serine-binding site is contributed by S383.

This sequence belongs to the class-II aminoacyl-tRNA synthetase family. Type-1 seryl-tRNA synthetase subfamily. Homodimer. The tRNA molecule binds across the dimer.

It localises to the cytoplasm. It carries out the reaction tRNA(Ser) + L-serine + ATP = L-seryl-tRNA(Ser) + AMP + diphosphate + H(+). It catalyses the reaction tRNA(Sec) + L-serine + ATP = L-seryl-tRNA(Sec) + AMP + diphosphate + H(+). It participates in aminoacyl-tRNA biosynthesis; selenocysteinyl-tRNA(Sec) biosynthesis; L-seryl-tRNA(Sec) from L-serine and tRNA(Sec): step 1/1. In terms of biological role, catalyzes the attachment of serine to tRNA(Ser). Is also able to aminoacylate tRNA(Sec) with serine, to form the misacylated tRNA L-seryl-tRNA(Sec), which will be further converted into selenocysteinyl-tRNA(Sec). The sequence is that of Serine--tRNA ligase from Nitrosococcus oceani (strain ATCC 19707 / BCRC 17464 / JCM 30415 / NCIMB 11848 / C-107).